We begin with the raw amino-acid sequence, 401 residues long: Phosrestin-1 (401 aa).

The protein belongs to the arrestin family.

Its function is as follows. Directly interacts with light-activated rhodopsin thereby activating the phosphorylation of metarhodopsin. Inhibits the dephosphorylation of metarhodopsin. The chain is Phosrestin-1 (ARR2) from Calliphora vicina (Blue blowfly).